The sequence spans 383 residues: uncharacterized protein (383 aa).

It to V.anguillarum virulence protein VirA.

Functionally, could have an enzymatic function. This is an uncharacterized protein from Sinorhizobium fredii (strain NBRC 101917 / NGR234).